Here is a 430-residue protein sequence, read N- to C-terminus: tRNA(Ile)-lysidine synthase (430 aa).

Residue 27–32 (SGGSDS) coordinates ATP.

The protein belongs to the tRNA(Ile)-lysidine synthase family.

It is found in the cytoplasm. It carries out the reaction cytidine(34) in tRNA(Ile2) + L-lysine + ATP = lysidine(34) in tRNA(Ile2) + AMP + diphosphate + H(+). Its function is as follows. Ligates lysine onto the cytidine present at position 34 of the AUA codon-specific tRNA(Ile) that contains the anticodon CAU, in an ATP-dependent manner. Cytidine is converted to lysidine, thus changing the amino acid specificity of the tRNA from methionine to isoleucine. The chain is tRNA(Ile)-lysidine synthase from Rickettsia felis (strain ATCC VR-1525 / URRWXCal2) (Rickettsia azadi).